A 253-amino-acid chain; its full sequence is Sporulated oocyst TA4 antigen (253 aa).

Residues M1–A23 form the signal peptide. Positions R182–L184 are cleaved as a propeptide — removed in mature form.

The TA4 antigen is composed of a 17 kDa and a 8 kDa chain, linked by a disulfide bond.

This chain is Sporulated oocyst TA4 antigen, found in Eimeria tenella (Coccidian parasite).